Reading from the N-terminus, the 662-residue chain is PAN2-PAN3 deadenylation complex subunit PAN3 (662 aa).

Disordered stretches follow at residues 1–26 and 59–131; these read MASA…AREN and TTYQ…RAET. Residues 26 to 55 form a C3H1-type zinc finger; sequence NAKDTLCRNVTIYGRCRYEDKGCAFNHDPH. A compositionally biased stretch (polar residues) spans 72 to 85; that stretch reads DSPSFTPSLLSSNG. The span at 86–102 shows a compositional bias: low complexity; the sequence is SSPTTASVTAKKAATIS. Residues 114–126 are compositionally biased toward polar residues; sequence RNITSRSNTSTPS. The segment at 265–525 is pseudokinase domain; it reads QTLPNTQLPA…NIDIFITGIS (261 aa). ATP contacts are provided by residues Arg-317, 366–373, and 425–426; these read DYHPLSKT and SK. The stretch at 526-564 forms a coiled coil; the sequence is SQLMSTFDSALHLDDELTSDLSRELENGRLVRLVTKLNF. Residues 565-662 form a knob domain region; that stretch reads VNERPEYEHD…ALLKPTRRLH (98 aa).

This sequence belongs to the protein kinase superfamily. PAN3 family. In terms of assembly, homodimer. Forms a heterotrimer with a catalytic subunit pan2 to form the poly(A)-nuclease (PAN) deadenylation complex. Interacts (via PAM-2 motif) with poly(A)-binding protein pab1 (via PABC domain), conferring substrate specificity of the enzyme complex.

It localises to the cytoplasm. In terms of biological role, regulatory subunit of the poly(A)-nuclease (PAN) deadenylation complex, one of two cytoplasmic mRNA deadenylases involved in mRNA turnover. PAN specifically shortens poly(A) tails of RNA and the activity is stimulated by poly(A)-binding protein pab1. PAN deadenylation is followed by rapid degradation of the shortened mRNA tails by the CCR4-NOT complex. Deadenylated mRNAs are then degraded by two alternative mechanisms, namely exosome-mediated 3'-5' exonucleolytic degradation, or deadenylation-dependent mRNA decaping and subsequent 5'-3' exonucleolytic degradation by xrn1. May also be involved in post-transcriptional maturation of mRNA poly(A) tails. pan3 acts as a positive regulator for PAN activity, recruiting the catalytic subunit pan2 to mRNA via its interaction with RNA and with pab1. The polypeptide is PAN2-PAN3 deadenylation complex subunit PAN3 (Aspergillus oryzae (strain ATCC 42149 / RIB 40) (Yellow koji mold)).